The chain runs to 1004 residues: 2-oxoglutarate dehydrogenase E1 component (1004 aa).

This sequence belongs to the alpha-ketoglutarate dehydrogenase family. As to quaternary structure, homodimer. Part of the 2-oxoglutarate dehydrogenase (OGDH) complex composed of E1 (2-oxoglutarate dehydrogenase), E2 (dihydrolipoamide succinyltransferase) and E3 (dihydrolipoamide dehydrogenase); the complex contains multiple copies of the three enzymatic components (E1, E2 and E3). Requires thiamine diphosphate as cofactor.

The catalysed reaction is N(6)-[(R)-lipoyl]-L-lysyl-[protein] + 2-oxoglutarate + H(+) = N(6)-[(R)-S(8)-succinyldihydrolipoyl]-L-lysyl-[protein] + CO2. Functionally, E1 component of the 2-oxoglutarate dehydrogenase (OGDH) complex which catalyzes the decarboxylation of 2-oxoglutarate, the first step in the conversion of 2-oxoglutarate to succinyl-CoA and CO(2). This chain is 2-oxoglutarate dehydrogenase E1 component, found in Brucella ovis (strain ATCC 25840 / 63/290 / NCTC 10512).